We begin with the raw amino-acid sequence, 441 residues long: Trigger factor (441 aa).

The PPIase FKBP-type domain occupies 175–260; it reads GDKVVIDYNS…LVSIMVPKDV (86 aa).

It belongs to the FKBP-type PPIase family. Tig subfamily.

The protein localises to the cytoplasm. It carries out the reaction [protein]-peptidylproline (omega=180) = [protein]-peptidylproline (omega=0). Its function is as follows. Involved in protein export. Acts as a chaperone by maintaining the newly synthesized protein in an open conformation. Functions as a peptidyl-prolyl cis-trans isomerase. The polypeptide is Trigger factor (Anaplasma marginale (strain St. Maries)).